Reading from the N-terminus, the 56-residue chain is Large ribosomal subunit protein bL33 (56 aa).

This sequence belongs to the bacterial ribosomal protein bL33 family.

This chain is Large ribosomal subunit protein bL33, found in Anaplasma marginale (strain Florida).